The sequence spans 333 residues: Holliday junction branch migration complex subunit RuvB (333 aa).

The tract at residues 1–182 (MDERLLSGES…FGVLSRLEYY (182 aa)) is large ATPase domain (RuvB-L). ATP-binding positions include Leu-21, Arg-22, Gly-63, Lys-66, Thr-67, Thr-68, 129 to 131 (EDF), Arg-172, Tyr-182, and Arg-219. Thr-67 lines the Mg(2+) pocket. The tract at residues 183–253 (TVDQLSAIVE…ITQMALELLQ (71 aa)) is small ATPAse domain (RuvB-S). The segment at 256–333 (KLGLDHIDHK…EHFGMEIPKV (78 aa)) is head domain (RuvB-H). DNA-binding residues include Arg-311 and Arg-316.

It belongs to the RuvB family. As to quaternary structure, homohexamer. Forms an RuvA(8)-RuvB(12)-Holliday junction (HJ) complex. HJ DNA is sandwiched between 2 RuvA tetramers; dsDNA enters through RuvA and exits via RuvB. An RuvB hexamer assembles on each DNA strand where it exits the tetramer. Each RuvB hexamer is contacted by two RuvA subunits (via domain III) on 2 adjacent RuvB subunits; this complex drives branch migration. In the full resolvosome a probable DNA-RuvA(4)-RuvB(12)-RuvC(2) complex forms which resolves the HJ.

It localises to the cytoplasm. It carries out the reaction ATP + H2O = ADP + phosphate + H(+). Its function is as follows. The RuvA-RuvB-RuvC complex processes Holliday junction (HJ) DNA during genetic recombination and DNA repair, while the RuvA-RuvB complex plays an important role in the rescue of blocked DNA replication forks via replication fork reversal (RFR). RuvA specifically binds to HJ cruciform DNA, conferring on it an open structure. The RuvB hexamer acts as an ATP-dependent pump, pulling dsDNA into and through the RuvAB complex. RuvB forms 2 homohexamers on either side of HJ DNA bound by 1 or 2 RuvA tetramers; 4 subunits per hexamer contact DNA at a time. Coordinated motions by a converter formed by DNA-disengaged RuvB subunits stimulates ATP hydrolysis and nucleotide exchange. Immobilization of the converter enables RuvB to convert the ATP-contained energy into a lever motion, pulling 2 nucleotides of DNA out of the RuvA tetramer per ATP hydrolyzed, thus driving DNA branch migration. The RuvB motors rotate together with the DNA substrate, which together with the progressing nucleotide cycle form the mechanistic basis for DNA recombination by continuous HJ branch migration. Branch migration allows RuvC to scan DNA until it finds its consensus sequence, where it cleaves and resolves cruciform DNA. The polypeptide is Holliday junction branch migration complex subunit RuvB (Bacillus cereus (strain G9842)).